Consider the following 133-residue polypeptide: Small ribosomal subunit protein bS18 (133 aa).

A disordered region spans residues 1-63 (MARPDMGGPK…GDEGGGRRGF (63 aa)). A compositionally biased stretch (gly residues) spans 9-39 (PKTGGFGGPRSGGFGGGGGGGFGGGGFGGGR). Residues 40 to 59 (GGDRGDRGDRDDRGGDEGGG) are compositionally biased toward basic and acidic residues.

It belongs to the bacterial ribosomal protein bS18 family. In terms of assembly, part of the 30S ribosomal subunit. Forms a tight heterodimer with protein bS6.

In terms of biological role, binds as a heterodimer with protein bS6 to the central domain of the 16S rRNA, where it helps stabilize the platform of the 30S subunit. This chain is Small ribosomal subunit protein bS18, found in Anaeromyxobacter dehalogenans (strain 2CP-1 / ATCC BAA-258).